A 689-amino-acid polypeptide reads, in one-letter code: Quinidine resistance protein 3 (689 aa).

A compositionally biased stretch (polar residues) spans 1-24 (MQAQGSQSNVGSLRSNCSDNSLPN). Positions 1–73 (MQAQGSQSNV…DNQLSRLKSE (73 aa)) are disordered. Residues 1–108 (MQAQGSQSNV…RDYPPMMKKM (108 aa)) are Extracellular-facing. Composition is skewed to basic and acidic residues over residues 29-51 (MHCD…EKTN) and 59-73 (SREH…LKSE). A helical membrane pass occupies residues 109–131 (IVFLIAFSSMMGPMGTSIIFPAI). The Cytoplasmic portion of the chain corresponds to 132–139 (NSITTEFK). The chain crosses the membrane as a helical span at residues 140 to 163 (TSVIMVNVSIGVYLLSLGVFPLWW). The Extracellular portion of the chain corresponds to 164 to 175 (SSLSELEGRRTT). A helical membrane pass occupies residues 176–193 (YITSFALLFAFNIGSALA). Over 194–235 (PDINSFIALRMLCGAASASVQSVGAGTVADLYISEDRGKNLS) the chain is Cytoplasmic. The helical transmembrane segment at 236-256 (YYYLGPLLAPLLSPIFGSLLV) threads the bilayer. Over 257-265 (NRWPWRSTQ) the chain is Extracellular. The helical transmembrane segment at 266 to 283 (WFMVILSGCNVILLTVLL) threads the bilayer. The Cytoplasmic portion of the chain corresponds to 284–475 (PETLRKQDSK…KSLHFLEYPP (192 aa)). Residue S436 is modified to Phosphoserine. A helical membrane pass occupies residues 476–493 (VALAITFSAISFSTVYFV). Over 494–510 (NMTVEYKYSRPPYNFKP) the chain is Extracellular. Residues 511–532 (LYIGLLYIPNSVTYFFASIYGG) traverse the membrane as a helical segment. At 533–558 (RWVDMLLKRYKEKYGILAPEARISWN) the chain is on the cytoplasmic side. A helical transmembrane segment spans residues 559–577 (VVTSVISFPIALLIFGWCL). The Extracellular portion of the chain corresponds to 578-586 (DKKCHWVTP). A helical transmembrane segment spans residues 587-609 (LIGTALFGYAAMMTIGATLSYLV). At 610–624 (DSLPGKGATGVALNN) the chain is on the cytoplasmic side. Residues 625-642 (LIRQILAATAVFVTTPML) form a helical membrane-spanning segment. Topologically, residues 643-648 (NGMGTG) are extracellular. The chain crosses the membrane as a helical span at residues 649-668 (WAFTMLAFIVLGASSVLIIL). The Cytoplasmic segment spans residues 669 to 689 (KKHGDYWRENYDLQKLYDKID).

Belongs to the major facilitator superfamily. CAR1 family.

The protein localises to the cell membrane. In terms of biological role, multidrug resistance transporter involved in resistance and adaptation to quinidine and to the herbicide barban (4-chloro-2-butynyl [3-chlorophenyl] carbamate). This is Quinidine resistance protein 3 (QDR3) from Saccharomyces cerevisiae (strain ATCC 204508 / S288c) (Baker's yeast).